Reading from the N-terminus, the 170-residue chain is Centrin-2 (170 aa).

Residues Met-1–Pro-21 are disordered. EF-hand domains lie at Asp-26–Glu-61, Thr-62–Asp-97, Glu-99–Thr-134, and Met-135–Pro-170. Ca(2+) is bound by residues Asp-39, Asp-41, Ser-43, Met-45, and Glu-50.

Belongs to the centrin family. As to quaternary structure, monomer. Does not homooligomerize.

Its subcellular location is the cytoplasm. It localises to the cytoskeleton. The protein localises to the microtubule organizing center. It is found in the centrosome. In terms of biological role, in tachyzoites, plays an essential role in microneme secretion that ensures parasite motility and attachment to, invasion of and egress from host cells. Also involved in the architecture of the peripheral annuli where it appears to regulate the localization of PAP2. In association with the myosin motor MyoJ, involved in the constriction of the basal complex at the end of daughter cell division in an actin-dependent manner; the basal complex is a cytoskeletal structure formed at the tachyzoite basal pole during daughter cell formation. May be involved in parasite replication. This Toxoplasma gondii (strain ATCC 50611 / Me49) protein is Centrin-2.